A 284-amino-acid chain; its full sequence is Pantothenate synthetase (284 aa).

An ATP-binding site is contributed by 30 to 37 (MGNLHDGH). The Proton donor role is filled by histidine 37. Glutamine 61 is a (R)-pantoate binding site. Glutamine 61 lines the beta-alanine pocket. 149–152 (GEKD) contacts ATP. Position 155 (glutamine 155) interacts with (R)-pantoate. Residues isoleucine 178 and 186–189 (LSSR) contribute to the ATP site.

Belongs to the pantothenate synthetase family. In terms of assembly, homodimer.

It is found in the cytoplasm. It carries out the reaction (R)-pantoate + beta-alanine + ATP = (R)-pantothenate + AMP + diphosphate + H(+). The protein operates within cofactor biosynthesis; (R)-pantothenate biosynthesis; (R)-pantothenate from (R)-pantoate and beta-alanine: step 1/1. Catalyzes the condensation of pantoate with beta-alanine in an ATP-dependent reaction via a pantoyl-adenylate intermediate. The sequence is that of Pantothenate synthetase from Salmonella paratyphi B (strain ATCC BAA-1250 / SPB7).